The following is a 658-amino-acid chain: Heat shock protein homolog SSE1 (658 aa).

A compositionally biased stretch (basic and acidic residues) spans 614 to 627; the sequence is KRKEEERKSKKENA. The tract at residues 614-658 is disordered; the sequence is KRKEEERKSKKENAQEGTSSKPESKEESEAKEDNDEESDVASIDE. A compositionally biased stretch (acidic residues) spans 642–658; the sequence is EAKEDNDEESDVASIDE.

Belongs to the heat shock protein 70 family.

The protein resides in the cytoplasm. In terms of biological role, required for normal growth at various temperatures. This Encephalitozoon cuniculi (strain GB-M1) (Microsporidian parasite) protein is Heat shock protein homolog SSE1 (SSE1).